Consider the following 322-residue polypeptide: Homoserine kinase (322 aa).

It belongs to the pseudomonas-type ThrB family.

The enzyme catalyses L-homoserine + ATP = O-phospho-L-homoserine + ADP + H(+). It functions in the pathway amino-acid biosynthesis; L-threonine biosynthesis; L-threonine from L-aspartate: step 4/5. This chain is Homoserine kinase, found in Agrobacterium fabrum (strain C58 / ATCC 33970) (Agrobacterium tumefaciens (strain C58)).